A 301-amino-acid polypeptide reads, in one-letter code: MAKPLIIPAQSMSFSLSWRDYFEMTKPKVVALMLLTVLVGMCLALPGAVPLQPLVFGMLGIAMMAGSAAAFNHLIDRRIDGLMARTYNRPLPKGKLSVNKAFSFAFSLGVLGFVLLYWWVNPLTAWLTFASLIGYAVVYTAYLKRATPQNIVIGGLAGAMPPLLGWTAVTNELHGNALLLVIIIFTWTPPHFWALAIHRKAEYAKVDIPMLPVTHGVEFTKTCILLYTFLLALACLLPVLVGMSGPVYLVGSSILSCGFIYKAWQLKYQDEPGLAMKVFKFSIYHLMLLFVVLLVDHYLWG.

Helical transmembrane passes span 29–49 (VVAL…PGAV), 51–71 (LQPL…AAAF), 101–121 (AFSF…WWVN), 123–143 (LTAW…TAYL), 150–170 (NIVI…TAVT), 177–197 (ALLL…ALAI), 223–243 (CILL…LVGM), 244–264 (SGPV…YKAW), and 281–301 (FSIY…YLWG).

It belongs to the UbiA prenyltransferase family. Protoheme IX farnesyltransferase subfamily.

It is found in the cell inner membrane. It catalyses the reaction heme b + (2E,6E)-farnesyl diphosphate + H2O = Fe(II)-heme o + diphosphate. It participates in porphyrin-containing compound metabolism; heme O biosynthesis; heme O from protoheme: step 1/1. Functionally, converts heme B (protoheme IX) to heme O by substitution of the vinyl group on carbon 2 of heme B porphyrin ring with a hydroxyethyl farnesyl side group. The chain is Protoheme IX farnesyltransferase from Shewanella denitrificans (strain OS217 / ATCC BAA-1090 / DSM 15013).